Consider the following 247-residue polypeptide: UPF0246 protein LAF_1150 (247 aa).

The protein belongs to the UPF0246 family.

In Limosilactobacillus fermentum (strain NBRC 3956 / LMG 18251) (Lactobacillus fermentum), this protein is UPF0246 protein LAF_1150.